We begin with the raw amino-acid sequence, 398 residues long: S-adenosylmethionine synthase (398 aa).

Residue His19 coordinates ATP. Asp21 contacts Mg(2+). K(+) is bound at residue Glu47. Positions 60 and 103 each coordinate L-methionine. The tract at residues 103 to 113 is flexible loop; sequence QSPDIAQGVDV. ATP is bound by residues 177 to 179, 243 to 244, Asp252, 258 to 259, Ala275, and Lys279; these read DGK, RF, and RK. L-methionine is bound at residue Asp252. Lys283 is an L-methionine binding site.

It belongs to the AdoMet synthase family. In terms of assembly, homotetramer; dimer of dimers. Requires Mg(2+) as cofactor. K(+) is required as a cofactor.

It localises to the cytoplasm. The enzyme catalyses L-methionine + ATP + H2O = S-adenosyl-L-methionine + phosphate + diphosphate. The protein operates within amino-acid biosynthesis; S-adenosyl-L-methionine biosynthesis; S-adenosyl-L-methionine from L-methionine: step 1/1. Catalyzes the formation of S-adenosylmethionine (AdoMet) from methionine and ATP. The overall synthetic reaction is composed of two sequential steps, AdoMet formation and the subsequent tripolyphosphate hydrolysis which occurs prior to release of AdoMet from the enzyme. The polypeptide is S-adenosylmethionine synthase (Symbiobacterium thermophilum (strain DSM 24528 / JCM 14929 / IAM 14863 / T)).